The chain runs to 446 residues: 3-phosphoshikimate 1-carboxyvinyltransferase (446 aa).

Positions 26, 27, and 31 each coordinate 3-phosphoshikimate. Lys26 contributes to the phosphoenolpyruvate binding site. Phosphoenolpyruvate is bound by residues Gly100 and Arg128. 3-phosphoshikimate-binding residues include Ser171, Ser172, Gln173, Ser200, Glu315, and His344. Gln173 is a phosphoenolpyruvate binding site. The Proton acceptor role is filled by Glu315. Phosphoenolpyruvate contacts are provided by Arg348, Arg389, and Lys414.

Belongs to the EPSP synthase family. As to quaternary structure, monomer.

It localises to the cytoplasm. It catalyses the reaction 3-phosphoshikimate + phosphoenolpyruvate = 5-O-(1-carboxyvinyl)-3-phosphoshikimate + phosphate. Its pathway is metabolic intermediate biosynthesis; chorismate biosynthesis; chorismate from D-erythrose 4-phosphate and phosphoenolpyruvate: step 6/7. In terms of biological role, catalyzes the transfer of the enolpyruvyl moiety of phosphoenolpyruvate (PEP) to the 5-hydroxyl of shikimate-3-phosphate (S3P) to produce enolpyruvyl shikimate-3-phosphate and inorganic phosphate. In Mycolicibacterium gilvum (strain PYR-GCK) (Mycobacterium gilvum (strain PYR-GCK)), this protein is 3-phosphoshikimate 1-carboxyvinyltransferase.